The chain runs to 190 residues: Protein GrpE (190 aa).

The segment covering 1-18 (MTETPNTSSEEIQTSEPS) has biased composition (polar residues). The disordered stretch occupies residues 1-21 (MTETPNTSSEEIQTSEPSPDN).

The protein belongs to the GrpE family. In terms of assembly, homodimer.

The protein localises to the cytoplasm. In terms of biological role, participates actively in the response to hyperosmotic and heat shock by preventing the aggregation of stress-denatured proteins, in association with DnaK and GrpE. It is the nucleotide exchange factor for DnaK and may function as a thermosensor. Unfolded proteins bind initially to DnaJ; upon interaction with the DnaJ-bound protein, DnaK hydrolyzes its bound ATP, resulting in the formation of a stable complex. GrpE releases ADP from DnaK; ATP binding to DnaK triggers the release of the substrate protein, thus completing the reaction cycle. Several rounds of ATP-dependent interactions between DnaJ, DnaK and GrpE are required for fully efficient folding. The protein is Protein GrpE of Chlamydia trachomatis serovar L2 (strain ATCC VR-902B / DSM 19102 / 434/Bu).